The chain runs to 359 residues: Peptide chain release factor 1 (359 aa).

Q234 carries the N5-methylglutamine modification. The segment at 283–305 is disordered; that stretch reads SQKDAARAADRRAQVGSGDRSER.

Belongs to the prokaryotic/mitochondrial release factor family. Post-translationally, methylated by PrmC. Methylation increases the termination efficiency of RF1.

Its subcellular location is the cytoplasm. Peptide chain release factor 1 directs the termination of translation in response to the peptide chain termination codons UAG and UAA. The chain is Peptide chain release factor 1 from Methylobacterium sp. (strain 4-46).